The primary structure comprises 545 residues: MSEFLRIAMAQFDFPVGAVAQNAERIIALIEQARDEHGADVVMFPELALSGYPPEDLLLRPGFLAHCQVAIERIAAATHGIVAVVGWPQSAGSVVYNVASVLCDGQVEQTYRKRELPNYAVFDERRYFEVDPNGSRCVFKVKGVPVGVLICEDLWFSEPLADTVCGGAELVLVPNASPYERGKHAQRDALLAERARETGAAIAYLNVVGGQDALVFDGASVVVDGHGRVHPAAAAFSDQWLVVDYMRSERRFVPLQWVVESEVSINALVWRAVVRGVQDYCRKNGFSKVWVGLSGGIDSALVLAIAVDALGADQVTAVRLPSRYTAELSNDLAAEQCHSLGVRLETVAIEPVFEGLLAALGPLFAGMAPDATEENLQSRSRGVILMALANKFGGLLLTTGNKSEYAVGYATIYGDMCGGYAPLKDIYKSQVFELAQWRNRVSDVLAIPPGVIHRPPSAELRAQQTDQDSLPPYEVLDGILSLYVDQEQSREDIIAAGYAAGVVDYVLNLVRINEWKRHQAAPGPKVSQRAFGRERRYPISNAYRG.

Residues leucine 5–arginine 247 enclose the CN hydrolase domain. The active-site Proton acceptor; for glutaminase activity is the glutamate 46. Residue lysine 113 is the For glutaminase activity of the active site. Tyrosine 119 lines the L-glutamine pocket. Residue cysteine 151 is the Nucleophile; for glutaminase activity of the active site. The L-glutamine site is built by serine 177 and lysine 183. Positions valine 269–glycine 545 are ligase. Glycine 292 to serine 299 lines the ATP pocket. Asparagine 375 contributes to the deamido-NAD(+) binding site. Threonine 399 serves as a coordination point for ATP. Positions 404 and 516 each coordinate deamido-NAD(+).

This sequence in the C-terminal section; belongs to the NAD synthetase family.

The enzyme catalyses deamido-NAD(+) + L-glutamine + ATP + H2O = L-glutamate + AMP + diphosphate + NAD(+) + H(+). It functions in the pathway cofactor biosynthesis; NAD(+) biosynthesis; NAD(+) from deamido-NAD(+) (L-Gln route): step 1/1. In terms of biological role, catalyzes the ATP-dependent amidation of deamido-NAD to form NAD. Uses L-glutamine as a nitrogen source. This Xylella fastidiosa (strain Temecula1 / ATCC 700964) protein is Glutamine-dependent NAD(+) synthetase.